Here is a 203-residue protein sequence, read N- to C-terminus: A-type ATP synthase subunit E (203 aa).

The protein belongs to the V-ATPase E subunit family. Has multiple subunits with at least A(3), B(3), C, D, E, F, H, I and proteolipid K(x).

Its subcellular location is the cell membrane. Component of the A-type ATP synthase that produces ATP from ADP in the presence of a proton gradient across the membrane. The polypeptide is A-type ATP synthase subunit E (Desulfurococcus sp. (strain SY)).